A 349-amino-acid polypeptide reads, in one-letter code: Mitomycin biosynthesis 6-O-methyltransferase (349 aa).

Residues serine 167, glycine 190, glutamate 213–arginine 214, aspartate 240–phenylalanine 241, and lysine 255 each bind S-adenosyl-L-methionine. Catalysis depends on histidine 259, which acts as the Proton acceptor. Residue asparagine 288 participates in substrate binding.

The protein belongs to the class I-like SAM-binding methyltransferase superfamily. Cation-independent O-methyltransferase family. COMT subfamily. Homodimer.

The catalysed reaction is 6-demethylmitomycin A + S-adenosyl-L-methionine = mitomycin A + S-adenosyl-L-homocysteine. It catalyses the reaction 6-demethylmitomycin B + S-adenosyl-L-methionine = mitomycin B + S-adenosyl-L-homocysteine. Completely inhibited by Zn(2+) and Cu(2+). In terms of biological role, involved in the biosynthesis of the quinone methoxy group present in the mitomycin A and B, which are used as anticancer agents. In vitro, catalyzes the 6-O-methylation of both C9-beta- and C9-alpha-configured 6-hydroxymitomycins via the transfer of the S-methyl group of S-adenosyl-L-methionine (AdoMet) to the 6-demethylmitomycin A and B. It can also use hydroxyquinone as substrate. This Streptomyces lavendulae protein is Mitomycin biosynthesis 6-O-methyltransferase.